We begin with the raw amino-acid sequence, 586 residues long: MAPYLQTSLIWIAYAVAVGLALFAAIVTTFTWQKPRERSAVVNTVAVVSLTSLLATVLLLPVDIALVSSTGSVHLGVNKEWATPEHVAGMLRTLQIVYYSLYSLDALLCLIVIPFAYFWYEEYDEVEEEEGTRSTGAKLWGAFKYTSGFIILVLILFFVGFFVPAAGNQKGGHLDLDYFKRLLAANKGEKALTFAVGLLVCLGTLLYVLYTSSGLALLPISFIKSAPSISAPQLSETTASALERNRERQRQLELRNGGNHDEMPSKDRRELESLVREERTLVRRARLAAEAQGEGRSWVYRTWTKICAVFRPLKLVGGILLLLVSVIVWVSMLITTIDKASNSLCKGHCGYILGQIKIFQPVNWLFLQAAKAFPVDYIIMAFLVLFFFSSSISGLATVGIRFLWVQIFQIRRGRTAPQAILIATVMMALIILGINYSIAMMAAPQYSIYGTQTFCTAEPTAHGKQPDCSEHPEMVRPCSEGFKQPLAKDICTPSVMSTFLNRVTLNWPVFGAVDFWAQVAFLAVFLIVLVTSLFRTPKLNMSELDEEAEADEEEGLLASTGRRFGATWQDITGRSGQASNQENGDN.

The next 9 helical transmembrane spans lie at 10-30, 47-67, 96-116, 147-167, 191-211, 315-335, 378-398, 420-440, and 509-529; these read IWIA…VTTF, VVSL…IALV, IVYY…IPFA, SGFI…PAAG, ALTF…VLYT, LVGG…MLIT, IIMA…LATV, ILIA…SIAM, and VFGA…LIVL. Residue Asn540 is glycosylated (N-linked (GlcNAc...) asparagine).

Belongs to the LIMR family. LMBRD1 subfamily.

The protein resides in the lysosome membrane. Functionally, probable lysosomal cobalamin transporter. Required to export cobalamin from lysosomes allowing its conversion to cofactors. The polypeptide is Probable lysosomal cobalamin transporter (Pyricularia oryzae (strain 70-15 / ATCC MYA-4617 / FGSC 8958) (Rice blast fungus)).